Reading from the N-terminus, the 975-residue chain is E3 ubiquitin-protein ligase BRE1A (975 aa).

The disordered stretch occupies residues 1–37; that stretch reads MSGIGSKRAAGEPGTSVPPEKKTAVEDSGTTVETIKL. Position 21 is an N6-acetyllysine (lysine 21). Serine 41 is modified (phosphoserine). The stretch at 43–90 forms a coiled coil; it reads TEELDIRTLQTKNRKLAEMLDQRQAIEDELREHIEKLERRQATDDASL. The disordered stretch occupies residues 125–155; sequence KALVVPEPEPDSDSNQERKDDRERGEGQEPA. Residues serine 136 and serine 138 each carry the phosphoserine modification. Positions 139-151 are enriched in basic and acidic residues; that stretch reads NQERKDDRERGEG. Coiled-coil stretches lie at residues 168 to 375 and 429 to 898; these read EEME…EEVV and SLHK…TTKK. Residues lysine 348 and lysine 510 each carry the N6-acetyllysine modification. The disordered stretch occupies residues 507 to 622; sequence DLNKTRLRSG…GKHDDGRKKE (116 aa). Position 522 is a phosphoserine (serine 522). Basic and acidic residues predominate over residues 527–540; the sequence is EDPKDEPAELKQDS. The segment covering 543-552 has biased composition (polar residues); sequence LATQSAASKA. The span at 558 to 622 shows a compositional bias: basic and acidic residues; that stretch reads NEIKSKRDEE…GKHDDGRKKE (65 aa). At serine 562 the chain carries Phosphoserine. The segment at 922–961 adopts an RING-type zinc-finger fold; that stretch reads CPCCNMRKKDAVLTKCFHVFCFECVKTRYDTRQRKCPKCN.

This sequence belongs to the BRE1 family. Component of the RNF20/40 complex (also known as BRE1 complex) probably composed of 2 copies of RNF20/BRE1A and 2 copies of RNF40/BRE1B. Interacts with UBE2E1/UBCH6. Interacts with p53/TP53 and WAC. Interacts with PAF1; the interaction mediates the association of the PAF1 and RNF20/40 complexes which is a prerequsite for recruitment of UBE2A/B. Interacts with PA2G4. Interacts with FBXL19.

It is found in the nucleus. It catalyses the reaction S-ubiquitinyl-[E2 ubiquitin-conjugating enzyme]-L-cysteine + [acceptor protein]-L-lysine = [E2 ubiquitin-conjugating enzyme]-L-cysteine + N(6)-ubiquitinyl-[acceptor protein]-L-lysine.. The protein operates within protein modification; protein ubiquitination. Component of the RNF20/40 E3 ubiquitin-protein ligase complex that mediates monoubiquitination of 'Lys-120' of histone H2B (H2BK120ub1). H2BK120ub1 gives a specific tag for epigenetic transcriptional activation and is also prerequisite for histone H3 'Lys-4' and 'Lys-79' methylation (H3K4me and H3K79me, respectively). It thereby plays a central role in histone code and gene regulation. The RNF20/40 complex forms a H2B ubiquitin ligase complex in cooperation with the E2 enzyme UBE2A or UBE2B; reports about the cooperation with UBE2E1/UBCH are contradictory. Required for transcriptional activation of Hox genes. Recruited to the MDM2 promoter, probably by being recruited by p53/TP53, and thereby acts as a transcriptional coactivator. Mediates the polyubiquitination of PA2G4 leading to its proteasome-mediated degradation. The protein is E3 ubiquitin-protein ligase BRE1A (RNF20) of Bos taurus (Bovine).